A 254-amino-acid chain; its full sequence is 4-hydroxy-tetrahydrodipicolinate reductase (254 aa).

Residues 8 to 13 (GCSGKM), Asp-35, 86 to 88 (CST), and 110 to 113 (SANM) contribute to the NAD(+) site. Residue His-143 is the Proton donor/acceptor of the active site. His-144 contacts (S)-2,3,4,5-tetrahydrodipicolinate. The Proton donor role is filled by Lys-147. (S)-2,3,4,5-tetrahydrodipicolinate is bound at residue 153–154 (GT).

This sequence belongs to the DapB family.

Its subcellular location is the cytoplasm. The enzyme catalyses (S)-2,3,4,5-tetrahydrodipicolinate + NAD(+) + H2O = (2S,4S)-4-hydroxy-2,3,4,5-tetrahydrodipicolinate + NADH + H(+). It catalyses the reaction (S)-2,3,4,5-tetrahydrodipicolinate + NADP(+) + H2O = (2S,4S)-4-hydroxy-2,3,4,5-tetrahydrodipicolinate + NADPH + H(+). Its pathway is amino-acid biosynthesis; L-lysine biosynthesis via DAP pathway; (S)-tetrahydrodipicolinate from L-aspartate: step 4/4. Its function is as follows. Catalyzes the conversion of 4-hydroxy-tetrahydrodipicolinate (HTPA) to tetrahydrodipicolinate. The chain is 4-hydroxy-tetrahydrodipicolinate reductase from Clostridium perfringens (strain 13 / Type A).